Consider the following 227-residue polypeptide: Flagellar L-ring protein (227 aa).

A signal peptide spans 1-16 (MRNIILFAAGTLLLSG). Residue cysteine 17 is the site of N-palmitoyl cysteine attachment. The S-diacylglycerol cysteine moiety is linked to residue cysteine 17.

This sequence belongs to the FlgH family. In terms of assembly, the basal body constitutes a major portion of the flagellar organelle and consists of four rings (L,P,S, and M) mounted on a central rod.

The protein localises to the cell outer membrane. Its subcellular location is the bacterial flagellum basal body. Functionally, assembles around the rod to form the L-ring and probably protects the motor/basal body from shearing forces during rotation. The polypeptide is Flagellar L-ring protein (Pseudoalteromonas translucida (strain TAC 125)).